Consider the following 317-residue polypeptide: MATH domain and coiled-coil domain-containing protein At3g58240 (317 aa).

Residues 6–131 (DNKFTWVIKN…DGEVEIVAQI (126 aa)) enclose the MATH domain. Residues 254–305 (KLDWLEKKLDEVKEIKKKCERVTEMEKELHDLMNKHTNVSKLLEKEKLEIKN) are a coiled coil.

This Arabidopsis thaliana (Mouse-ear cress) protein is MATH domain and coiled-coil domain-containing protein At3g58240.